The chain runs to 488 residues: L-arabinose isomerase 2 (488 aa).

Mn(2+)-binding residues include Glu-306, Glu-331, His-348, and His-447.

It belongs to the arabinose isomerase family. Mn(2+) serves as cofactor.

The catalysed reaction is beta-L-arabinopyranose = L-ribulose. The protein operates within carbohydrate degradation; L-arabinose degradation via L-ribulose; D-xylulose 5-phosphate from L-arabinose (bacterial route): step 1/3. Functionally, catalyzes the conversion of L-arabinose to L-ribulose. The protein is L-arabinose isomerase 2 of Clostridium acetobutylicum (strain ATCC 824 / DSM 792 / JCM 1419 / IAM 19013 / LMG 5710 / NBRC 13948 / NRRL B-527 / VKM B-1787 / 2291 / W).